The primary structure comprises 85 residues: Cell division topological specificity factor (85 aa).

The protein belongs to the MinE family.

Its function is as follows. Prevents the cell division inhibition by proteins MinC and MinD at internal division sites while permitting inhibition at polar sites. This ensures cell division at the proper site by restricting the formation of a division septum at the midpoint of the long axis of the cell. In Stutzerimonas stutzeri (strain A1501) (Pseudomonas stutzeri), this protein is Cell division topological specificity factor.